Consider the following 266-residue polypeptide: Pyridoxal phosphate phosphatase YigL (266 aa).

Aspartate 8 serves as the catalytic Nucleophile. Aspartate 8 serves as a coordination point for Mg(2+). Leucine 9 contacts phosphate. Aspartate 10 provides a ligand contact to Mg(2+). Phosphate contacts are provided by residues 42–43 and lysine 191; that span reads TG. A Mg(2+)-binding site is contributed by aspartate 214. Asparagine 217 provides a ligand contact to phosphate.

The protein belongs to the HAD-like hydrolase superfamily. Cof family. It depends on Mg(2+) as a cofactor. Requires Mn(2+) as cofactor. The cofactor is Co(2+). Zn(2+) serves as cofactor.

The catalysed reaction is pyridoxal 5'-phosphate + H2O = pyridoxal + phosphate. It catalyses the reaction sugar phosphate + H2O = sugar + phosphate.. Catalyzes the dephosphorylation of pyridoxal-phosphate (PLP) and sugar phosphate. This chain is Pyridoxal phosphate phosphatase YigL (yigL), found in Escherichia coli O157:H7.